The sequence spans 121 residues: uncharacterized protein (121 aa).

2 disordered regions span residues 1-28 and 60-82; these read MGCASAKHVATVQNEEEAQKGKNYQNGD and QENLEKSASSNVRLKTNKEVPGL. 2 positions are modified to phosphoserine: S95 and S115.

In terms of tissue distribution, expressed in spleen, prostate, testis and uterus.

This is an uncharacterized protein from Homo sapiens (Human).